Reading from the N-terminus, the 394-residue chain is Succinate--CoA ligase [ADP-forming] subunit beta 1 (394 aa).

In terms of domain architecture, ATP-grasp spans 9 to 237 (RDLFAKHDVP…KAAANPLEAA (229 aa)). Residues lysine 45, 52–54 (GRG), glutamate 92, proline 95, and glutamate 100 contribute to the ATP site. Residues asparagine 192 and aspartate 206 each contribute to the Mg(2+) site. Substrate-binding positions include asparagine 257 and 319–321 (GIT).

This sequence belongs to the succinate/malate CoA ligase beta subunit family. As to quaternary structure, heterotetramer of two alpha and two beta subunits. Mg(2+) is required as a cofactor.

It carries out the reaction succinate + ATP + CoA = succinyl-CoA + ADP + phosphate. The catalysed reaction is GTP + succinate + CoA = succinyl-CoA + GDP + phosphate. It functions in the pathway carbohydrate metabolism; tricarboxylic acid cycle; succinate from succinyl-CoA (ligase route): step 1/1. Its function is as follows. Succinyl-CoA synthetase functions in the citric acid cycle (TCA), coupling the hydrolysis of succinyl-CoA to the synthesis of either ATP or GTP and thus represents the only step of substrate-level phosphorylation in the TCA. The beta subunit provides nucleotide specificity of the enzyme and binds the substrate succinate, while the binding sites for coenzyme A and phosphate are found in the alpha subunit. The chain is Succinate--CoA ligase [ADP-forming] subunit beta 1 from Streptomyces coelicolor (strain ATCC BAA-471 / A3(2) / M145).